We begin with the raw amino-acid sequence, 147 residues long: Hemoglobin subunit beta-1 (147 aa).

The Globin domain maps to 3–147 (KWSKTELTII…VVSALGKQYH (145 aa)). Heme b-binding residues include His64 and His93.

It belongs to the globin family. As to quaternary structure, hb1 is a heterotetramer of two alpha chains and two beta-1 chains. Red blood cells.

In terms of biological role, involved in oxygen transport from gills to the various peripheral tissues. This is Hemoglobin subunit beta-1 (hbb1) from Cygnodraco mawsoni (Antarctic dragonfish).